Reading from the N-terminus, the 213-residue chain is Ribosomal RNA small subunit methyltransferase G (213 aa).

S-adenosyl-L-methionine-binding positions include glycine 72, phenylalanine 77, 125–126 (IE), and arginine 141.

It belongs to the methyltransferase superfamily. RNA methyltransferase RsmG family.

The protein resides in the cytoplasm. It catalyses the reaction guanosine(527) in 16S rRNA + S-adenosyl-L-methionine = N(7)-methylguanosine(527) in 16S rRNA + S-adenosyl-L-homocysteine. Its function is as follows. Specifically methylates the N7 position of guanine in position 527 of 16S rRNA. The protein is Ribosomal RNA small subunit methyltransferase G of Sinorhizobium medicae (strain WSM419) (Ensifer medicae).